The following is a 951-amino-acid chain: Protein inturned (951 aa).

Disordered stretches follow at residues 1 to 32 (MEHS…FSSS), 189 to 208 (SSRN…NQRL), and 687 to 765 (TPKR…GGSG). The region spanning 187-269 (HQSSRNSKRS…PMQLKLTFET (83 aa)) is the PDZ domain. Residues 715-726 (PTRSSGGSDSGT) show a composition bias toward low complexity. Over residues 743–752 (MARKFGRRES) the composition is skewed to basic and acidic residues. The span at 754 to 765 (GSGGSDGSGGSG) shows a compositional bias: gly residues.

The protein belongs to the inturned family. In terms of assembly, interacts with fuz and wdpcp; fuz, intu and wdpcp probably form the core CPLANE (ciliogenesis and planar polarity effectors) complex. As to expression, expressed in the neural plate during neural tube closure with subsequent strong expression in the ventral neural tube and in facial mesenchyme.

It localises to the cell surface. Its subcellular location is the cell membrane. It is found in the cytoplasm. The protein resides in the cytoskeleton. The protein localises to the cilium basal body. Functionally, plays a role in the definition of cell polarity via the planar cell polarity (PCP) cascade. Required for ciliogenesis by controlling the organization of the apical actin cytoskeleton and the positioning of the basal bodies at the apical cell surface, which in turn is essential for the normal orientation of elongating ciliary microtubules. Proposed to function as core component of a functional module called CPLANE (ciliogenesis and planar polarity effectors) involved in recruitment of peripheral IFT-A proteins to basal bodies. Controls the localization of both rhoa and disheveled in multi-ciliated cells. Has an indirect effect on hedgehog signaling. The sequence is that of Protein inturned from Xenopus laevis (African clawed frog).